Here is a 243-residue protein sequence, read N- to C-terminus: Phosphoribosylaminoimidazole-succinocarboxamide synthase (243 aa).

Belongs to the SAICAR synthetase family.

The catalysed reaction is 5-amino-1-(5-phospho-D-ribosyl)imidazole-4-carboxylate + L-aspartate + ATP = (2S)-2-[5-amino-1-(5-phospho-beta-D-ribosyl)imidazole-4-carboxamido]succinate + ADP + phosphate + 2 H(+). It functions in the pathway purine metabolism; IMP biosynthesis via de novo pathway; 5-amino-1-(5-phospho-D-ribosyl)imidazole-4-carboxamide from 5-amino-1-(5-phospho-D-ribosyl)imidazole-4-carboxylate: step 1/2. The sequence is that of Phosphoribosylaminoimidazole-succinocarboxamide synthase from Thermosynechococcus vestitus (strain NIES-2133 / IAM M-273 / BP-1).